The primary structure comprises 175 residues: Protein-export protein SecB (175 aa).

The interval Gln154–Gln175 is disordered.

The protein belongs to the SecB family. As to quaternary structure, homotetramer, a dimer of dimers. One homotetramer interacts with 1 SecA dimer.

It localises to the cytoplasm. Its function is as follows. One of the proteins required for the normal export of preproteins out of the cell cytoplasm. It is a molecular chaperone that binds to a subset of precursor proteins, maintaining them in a translocation-competent state. It also specifically binds to its receptor SecA. The polypeptide is Protein-export protein SecB (Bordetella petrii (strain ATCC BAA-461 / DSM 12804 / CCUG 43448)).